The primary structure comprises 32 residues: Phospholipase A2 (32 aa).

Ca(2+)-binding residues include Tyr-16, Gly-18, and Gly-20.

Requires Ca(2+) as cofactor. In terms of tissue distribution, expressed by the venom gland.

The protein resides in the secreted. The catalysed reaction is a 1,2-diacyl-sn-glycero-3-phosphocholine + H2O = a 1-acyl-sn-glycero-3-phosphocholine + a fatty acid + H(+). Its function is as follows. PLA2 catalyzes the calcium-dependent hydrolysis of the 2-acyl groups in 3-sn-phosphoglycerides. The chain is Phospholipase A2 from Micrurus lemniscatus (South American coral snake).